Consider the following 193-residue polypeptide: Orotate phosphoribosyltransferase (193 aa).

5-phospho-alpha-D-ribose 1-diphosphate-binding positions include Arg-107, Lys-108, Lys-111, His-113, and 133–141 (EDVITSGGS). Thr-137 and Arg-165 together coordinate orotate.

It belongs to the purine/pyrimidine phosphoribosyltransferase family. PyrE subfamily. In terms of assembly, homodimer. Requires Mg(2+) as cofactor.

It catalyses the reaction orotidine 5'-phosphate + diphosphate = orotate + 5-phospho-alpha-D-ribose 1-diphosphate. Its pathway is pyrimidine metabolism; UMP biosynthesis via de novo pathway; UMP from orotate: step 1/2. Its function is as follows. Catalyzes the transfer of a ribosyl phosphate group from 5-phosphoribose 1-diphosphate to orotate, leading to the formation of orotidine monophosphate (OMP). The polypeptide is Orotate phosphoribosyltransferase (Rhodopirellula baltica (strain DSM 10527 / NCIMB 13988 / SH1)).